The primary structure comprises 277 residues: MNLTIPFAKGHATENDFIIIPDEDARLDLTPEMVVTLCDRRAGIGADGILRVVKAADVEGSTVDPSLWFMDYRNADGSLAEMCGNGVRLFAHWLYSRGLVDNTSFDIGTRAGVRHVDILQADQHSAQVRVDMGIPDVTGLSTCDINGQVFAGLGVDMGNPHLACVVPGLSASALADMELRAPTFDQEFFPHGVNVEIVTELEDDAVSMRVWERGVGETRSCGTGTVAAACAALADAGLGEGTVKVCVPGGEVEVQIFDDGSTLTGPSAIIALGEVQI.

Substrate-binding residues include Asn15 and Asn74. Cys83 (proton donor) is an active-site residue. Substrate-binding positions include 84–85 (GN), Asn159, Asn194, and 212–213 (ER). The active-site Proton acceptor is the Cys221. 222–223 (GT) lines the substrate pocket.

It belongs to the diaminopimelate epimerase family. As to quaternary structure, homodimer.

It localises to the cytoplasm. The catalysed reaction is (2S,6S)-2,6-diaminopimelate = meso-2,6-diaminopimelate. Its pathway is amino-acid biosynthesis; L-lysine biosynthesis via DAP pathway; DL-2,6-diaminopimelate from LL-2,6-diaminopimelate: step 1/1. Functionally, catalyzes the stereoinversion of LL-2,6-diaminopimelate (L,L-DAP) to meso-diaminopimelate (meso-DAP), a precursor of L-lysine and an essential component of the bacterial peptidoglycan. Involved in the succinylase branch of the diaminopimelate biosynthesis. This Corynebacterium glutamicum (strain ATCC 13032 / DSM 20300 / JCM 1318 / BCRC 11384 / CCUG 27702 / LMG 3730 / NBRC 12168 / NCIMB 10025 / NRRL B-2784 / 534) protein is Diaminopimelate epimerase.